The chain runs to 434 residues: [Pyruvate dehydrogenase (acetyl-transferring)] kinase isozyme 1, mitochondrial (434 aa).

A mitochondrion-targeting transit peptide spans Met-1–Leu-26. Residue Tyr-136 is modified to Phosphotyrosine; by FGFR1. In terms of domain architecture, Histidine kinase spans Thr-161 to Ser-391. Phosphotyrosine; by FGFR1, ABL1, FLT3 and JAK2 is present on Tyr-241. Tyr-242 is modified (phosphotyrosine; by FGFR1). Residues Glu-277–Arg-284, Asp-316, Ser-335–Thr-336, and Gly-352–Leu-357 contribute to the ATP site. Thr-336 carries the post-translational modification Phosphothreonine. Lys-403 carries the post-translational modification N6-succinyllysine.

Belongs to the PDK/BCKDK protein kinase family. As to quaternary structure, homodimer, and heterodimer with PDK2. Interacts with the pyruvate dehydrogenase complex subunit DLAT, and is part of the multimeric pyruvate dehydrogenase complex that contains multiple copies of pyruvate dehydrogenase (E1), dihydrolipoamide acetyltransferase (DLAT, E2) and lipoamide dehydrogenase (DLD, E3). Interacts with phosphoglycerate kinase PGK1; the interaction is direct, occurs under hypoxic conditions and leads to PDK1-mediated inhibition of pyruvate dehydrogenase complex activity. In terms of processing, phosphorylated by constitutively activated ABL1, FGFR1, FLT3 and JAK2 (in vitro), and this may also occur in cancer cells that express constitutively activated ABL1, FGFR1, FLT3 and JAK2. Phosphorylation at Tyr-241 and Tyr-242 strongly increases kinase activity, while phosphorylation at Tyr-136 has a lesser effect. Phosphorylated under hypoxic conditions at Thr-336 by phosphoglycerate kinase PGK1 which has an activating effect.

It is found in the mitochondrion matrix. It carries out the reaction L-seryl-[pyruvate dehydrogenase E1 alpha subunit] + ATP = O-phospho-L-seryl-[pyruvate dehydrogenase E1 alpha subunit] + ADP + H(+). In terms of biological role, kinase that plays a key role in regulation of glucose and fatty acid metabolism and homeostasis via phosphorylation of the pyruvate dehydrogenase subunits PDHA1 and PDHA2. This inhibits pyruvate dehydrogenase activity, and thereby regulates metabolite flux through the tricarboxylic acid cycle, down-regulates aerobic respiration and inhibits the formation of acetyl-coenzyme A from pyruvate. Plays an important role in cellular responses to hypoxia and is important for cell proliferation under hypoxia. The sequence is that of [Pyruvate dehydrogenase (acetyl-transferring)] kinase isozyme 1, mitochondrial (Pdk1) from Mus musculus (Mouse).